Reading from the N-terminus, the 213-residue chain is Large ribosomal subunit protein uL3 (213 aa).

The interval 122–147 (AIKRHGQSRGPMAHGSRYHRRPGSMG) is disordered.

It belongs to the universal ribosomal protein uL3 family. In terms of assembly, part of the 50S ribosomal subunit. Forms a cluster with proteins L14 and L19.

In terms of biological role, one of the primary rRNA binding proteins, it binds directly near the 3'-end of the 23S rRNA, where it nucleates assembly of the 50S subunit. The protein is Large ribosomal subunit protein uL3 of Geobacillus stearothermophilus (Bacillus stearothermophilus).